Reading from the N-terminus, the 691-residue chain is Menaquinone reductase, molybdopterin-binding-like subunit (691 aa).

The tat-type signal signal peptide spans 1-27 (MALDRRGFLKFIGGATAGILATPVVWK). Positions 50-106 (NSYVPTVSKLCPTGIGVRVRLVDGRPVRVIGNPEHPLSKGGVSSIAAAEVQMLYSPA) constitute a 4Fe-4S Mo/W bis-MGD-type domain.

Belongs to the prokaryotic molybdopterin-containing oxidoreductase family. The Qrc complex is composed of four subunits: QrcA, QrcB, QrcC and QrcD. Can form a supercomplex with the [NiFe] hydrogenase HynA1 and the tetraheme Type I cytochrome c3 TpIc(3), its physiological electron donors. It depends on There is no molybdenum or tungsten pterin cofactor present in the Qrc complex, despite the similarity of QrcB to molybdopterin-containing oxidoreductases. as a cofactor. In terms of processing, predicted to be exported by the Tat system. The position of the signal peptide cleavage has not been experimentally proven.

It is found in the periplasm. Component of the respiratory Qrc complex, that catalyzes the reduction of the menaquinone pool using electrons transferred from the reduced periplasmic cytochrome c3, and which is probably involved in sulfate respiration. Is likely essential for growth on H(2) or formate since the periplasmic hydrogenases and/or formate dehydrogenases act as primary electron donors for the Qrc complex. The function of the QrcB subunit is unknown; in the absence of a catalytic site, it may provide a structural scaffold for the other subunits. This is Menaquinone reductase, molybdopterin-binding-like subunit from Nitratidesulfovibrio vulgaris (strain ATCC 29579 / DSM 644 / CCUG 34227 / NCIMB 8303 / VKM B-1760 / Hildenborough) (Desulfovibrio vulgaris).